We begin with the raw amino-acid sequence, 133 residues long: Small ribosomal subunit protein uS8 (133 aa).

It belongs to the universal ribosomal protein uS8 family. As to quaternary structure, part of the 30S ribosomal subunit. Contacts proteins S5 and S12.

One of the primary rRNA binding proteins, it binds directly to 16S rRNA central domain where it helps coordinate assembly of the platform of the 30S subunit. The chain is Small ribosomal subunit protein uS8 from Parasynechococcus marenigrum (strain WH8102).